The primary structure comprises 143 residues: D-aminoacyl-tRNA deacylase (143 aa).

The short motif at 135–136 (GP) is the Gly-cisPro motif, important for rejection of L-amino acids element.

The protein belongs to the DTD family. As to quaternary structure, homodimer.

It localises to the cytoplasm. The catalysed reaction is glycyl-tRNA(Ala) + H2O = tRNA(Ala) + glycine + H(+). The enzyme catalyses a D-aminoacyl-tRNA + H2O = a tRNA + a D-alpha-amino acid + H(+). An aminoacyl-tRNA editing enzyme that deacylates mischarged D-aminoacyl-tRNAs. Also deacylates mischarged glycyl-tRNA(Ala), protecting cells against glycine mischarging by AlaRS. Acts via tRNA-based rather than protein-based catalysis; rejects L-amino acids rather than detecting D-amino acids in the active site. By recycling D-aminoacyl-tRNA to D-amino acids and free tRNA molecules, this enzyme counteracts the toxicity associated with the formation of D-aminoacyl-tRNA entities in vivo and helps enforce protein L-homochirality. This is D-aminoacyl-tRNA deacylase from Mycobacterium bovis (strain ATCC BAA-935 / AF2122/97).